A 247-amino-acid chain; its full sequence is Phycobilisome rod-core linker polypeptide CpcG2 (247 aa).

The PBS-linker domain maps to 11–189; sequence SSQNQRVPGY…YWRDKLENER (179 aa).

The protein belongs to the phycobilisome linker protein family. As to quaternary structure, the phycobilisome is a hemidiscoidal structure that is composed of two distinct substructures: a core complex and a number of rods radiating from the core.

Its subcellular location is the cellular thylakoid membrane. Rod-core linker protein required for attachment of phycocyanin to allophycocyanin in cores of phycobilisomes. In terms of biological role, linker polypeptides determine the state of aggregation and the location of the disk-shaped phycobiliprotein units within the phycobilisome and modulate their spectroscopic properties in order to mediate a directed and optimal energy transfer. The polypeptide is Phycobilisome rod-core linker polypeptide CpcG2 (cpcG2) (Mastigocladus laminosus (Fischerella sp.)).